A 2788-amino-acid polypeptide reads, in one-letter code: E3 ubiquitin-protein ligase UBR5 (2788 aa).

Over residues 68 to 78 (RLELGKPDNND) the composition is skewed to basic and acidic residues. The tract at residues 68 to 165 (RLELGKPDNN…DRGSGLLGSQ (98 aa)) is disordered. Over residues 84 to 101 (SSSGTGRTSRPGRTSDSP) the composition is skewed to low complexity. Ser100 is subject to Phosphoserine. Residues 125–134 (GVGGSGGGSS) show a composition bias toward gly residues. The UBA domain maps to 174–216 (VIPEELISQAQVVLQGKSRSVIIRELQRTNLDVNLAVNNLLSR). Ser317 carries the phosphoserine modification. A compositionally biased stretch (basic and acidic residues) spans 318–337 (FDNERGSTSKEGEPNPDKKN). The disordered stretch occupies residues 318–343 (FDNERGSTSKEGEPNPDKKNTPVQSP). Ser342 and Ser567 each carry phosphoserine. Residues 572–593 (KSMEKASKTIETKPESKQEPVK) show a composition bias toward basic and acidic residues. A disordered region spans residues 572–636 (KSMEKASKTI…PAPKEEEKVN (65 aa)). Ser601 carries the post-translational modification Phosphoserine. The span at 603–617 (ASTCSDASSIASSAS) shows a compositional bias: low complexity. Thr626 is subject to Phosphothreonine. A phosphoserine mark is found at Ser797, Ser917, and Ser1007. Disordered stretches follow at residues 988–1024 (AGLG…SMDP) and 1041–1064 (TAAT…EPSV). Positions 1006 to 1022 (VSPPIAPPSWVPDPPSM) are enriched in pro residues. The segment covering 1050–1062 (PSTSTIPGPSTEP) has biased composition (polar residues). A phosphothreonine mark is found at Thr1104 and Thr1124. The UBR-type zinc-finger motif lies at 1166 to 1234 (DTCSFTWTGA…EKCKCKTLIA (69 aa)). 5 positions are modified to phosphoserine: Ser1216, Ser1297, Ser1344, Ser1364, and Ser1470. The disordered stretch occupies residues 1288 to 1308 (REDRNRKTASPDDSDMPDHDL). The interval 1504 to 1729 (SVEPLPPRPS…PSSTSTPAAS (226 aa)) is disordered. The span at 1513–1526 (SSDQSSSSSQSQSS) shows a compositional bias: low complexity. Positions 1527–1542 (YIIRNPQQRRISQSQP) are enriched in polar residues. Ser1538 carries the phosphoserine modification. Composition is skewed to acidic residues over residues 1548 to 1563 (EEQD…EVEV) and 1594 to 1603 (HDEDGSDMEL). Over residues 1618-1627 (NHSNQDNASG) the composition is skewed to polar residues. Composition is skewed to low complexity over residues 1630–1646 (SVVT…ASSV), 1657–1670 (SNDS…SSQS), and 1715–1729 (AAST…PAAS). Thr1725 bears the Phosphothreonine mark. A Phosphoserine modification is found at Ser1730. Tyr1735 carries the post-translational modification Phosphotyrosine. Phosphoserine is present on Ser1769. Residues 1848-1881 (LASAGDPGHPNHPLHASQNSARRERMTAREEASL) are disordered. Residues 1868–1881 (ARRERMTAREEASL) show a composition bias toward basic and acidic residues. Thr1959 is modified (phosphothreonine). The disordered stretch occupies residues 1974 to 2011 (GIDNEDSEHENDDDTSQSATLNDKDDESLPAETGQNHP). Acidic residues predominate over residues 1975-1988 (IDNEDSEHENDDDT). Ser1980, Ser2016, and Ser2018 each carry phosphoserine. Thr2020 carries the phosphothreonine modification. Ser2066 carries the post-translational modification Phosphoserine. Residues 2106 to 2132 (NRQKKAGEDQSMLAEEADSSKPGPSAH) are disordered. Position 2203 is a phosphothreonine (Thr2203). 2 positions are modified to phosphoserine: Ser2231 and Ser2279. The disordered stretch occupies residues 2313–2383 (HTSLMQRLRN…SDDPDPLPAH (71 aa)). Basic and acidic residues-rich tracts occupy residues 2322-2338 (NRGE…EMRR) and 2346-2358 (SRRD…RRQL). The 78-residue stretch at 2367 to 2444 (PASEGNPSDD…AMELIVAHGR (78 aa)) folds into the PABC domain. The HECT domain maps to 2451-2788 (ILDLGLLDSS…AIKTKNFGFV (338 aa)). A phosphoserine mark is found at Ser2459, Ser2473, and Ser2475. The tract at residues 2463-2490 (VQENRKRHGSSRSVVDMDLDDTDDGDDN) is disordered. Residues 2479–2489 (MDLDDTDDGDD) show a composition bias toward acidic residues. Residue Cys2757 is the Glycyl thioester intermediate of the active site.

This sequence belongs to the UBR5 family. Homotetramer; composed of a dimer of dimers. Associates with CDK9 and TFIIS/TCEA1 and forms a transcription regulatory complex made of CDK9, RNAP II, UBR5 and TFIIS/TCEA1 that can stimulate target gene transcription (e.g. gamma fibrinogen/FGG) by recruiting their promoters. Associates with the E3 ligase complex containing DYRK2, EDD/UBR5, DDB1 and DCAF1 proteins (EDVP complex). Binds TOPBP1. Interacts with PIH1D1. Interacts with CIB1. Highest levels found in testis. Also present in liver, kidney, lung and brain.

It is found in the nucleus. The protein resides in the cytoplasm. The catalysed reaction is S-ubiquitinyl-[E2 ubiquitin-conjugating enzyme]-L-cysteine + [acceptor protein]-L-lysine = [E2 ubiquitin-conjugating enzyme]-L-cysteine + N(6)-ubiquitinyl-[acceptor protein]-L-lysine.. It functions in the pathway protein modification; protein ubiquitination. Functionally, E3 ubiquitin-protein ligase involved in different protein quality control pathways in the cytoplasm and nucleus. Mainly acts as a ubiquitin chain elongator that extends pre-ubiquitinated substrates. Component of the N-end rule pathway: ubiquitinates proteins bearing specific N-terminal residues that are destabilizing according to the N-end rule, leading to their degradation. Recognizes type-1 N-degrons, containing positively charged amino acids (Arg, Lys and His). Together with UBR4, part of a cytoplasm protein quality control pathway that prevents protein aggregation by catalyzing assembly of heterotypic 'Lys-11'-/'Lys-48'-linked branched ubiquitin chains on aggregated proteins, leading to substrate recognition by the segregase p97/VCP and degradation by the proteasome: UBR5 is probably branching multiple 'Lys-48'-linked chains of substrates initially modified with mixed conjugates by UBR4. Together with ITCH, catalyzes 'Lys-48'-/'Lys-63'-branched ubiquitination of TXNIP, leading to its degradation: UBR5 mediates branching of 'Lys-48'-linked chains of substrates initially modified with 'Lys-63'-linked conjugates by ITCH. Catalytic component of a nuclear protein quality control pathway that mediates ubiquitination and degradation of unpaired transcription factors (i.e. transcription factors that are not assembled into functional multiprotein complexes): specifically recognizes and binds degrons that are not accessible when transcription regulators are associated with their coactivators. Ubiquitinates various unpaired transcription regulator (MYC, SUPT4H1, SUPT5H, CDC20 and MCRS1), as well as ligand-bound nuclear receptors (ESR1, NR1H3, NR3C1, PGR, RARA, RXRA AND VDR) that are not associated with their nuclear receptor coactivators (NCOAs). Involved in maturation and/or transcriptional regulation of mRNA by mediating polyubiquitination and activation of CDK9. Also acts as a regulator of DNA damage response by acting as a suppressor of RNF168, an E3 ubiquitin-protein ligase that promotes accumulation of 'Lys-63'-linked histone H2A and H2AX at DNA damage sites, thereby acting as a guard against excessive spreading of ubiquitinated chromatin at damaged chromosomes. Regulates DNA topoisomerase II binding protein (TopBP1) in the DNA damage response. Ubiquitinates acetylated PCK1. Acts as a positive regulator of the canonical Wnt signaling pathway by mediating (1) ubiquitination and stabilization of CTNNB1, and (2) 'Lys-48'-linked ubiquitination and degradation of TLE3. Promotes disassembly of the mitotic checkpoint complex (MCC) from the APC/C complex by catalyzing ubiquitination of BUB1B, BUB3 and CDC20. Plays an essential role in extraembryonic development. Required for the maintenance of skeletal tissue homeostasis by acting as an inhibitor of hedgehog (HH) signaling. This Rattus norvegicus (Rat) protein is E3 ubiquitin-protein ligase UBR5 (Ubr5).